The primary structure comprises 407 residues: NADH dehydrogenase [ubiquinone] 1 alpha subcomplex subunit 10, mitochondrial (407 aa).

Residues 1 to 60 constitute a mitochondrion transit peptide; the sequence is MTAVFRVGLVRLVSRATQSPNLLQAQTNALPAAFQQRCSISGKTMRGGPRVPKAAPYPYK.

The protein belongs to the complex I NDUFA10 subunit family. As to quaternary structure, complex I is composed of 45 different subunits. This a component of the hydrophobic protein fraction. Forms a complex including sicily, ND-42 and Hsp83; the complex is necessary to chaperone ND-42 in the cytoplasm before mitochondrial import; the interaction between sicily and ND-42 is direct and occurs preferably between the unprocessed forms in the cytoplasm. The cofactor is FAD. Expressed in muscles (at protein level).

It is found in the mitochondrion matrix. The protein localises to the cytoplasm. Its function is as follows. Accessory subunit of the mitochondrial membrane respiratory chain NADH dehydrogenase (Complex I), that is believed not to be involved in catalysis. Complex I functions in the transfer of electrons from NADH to the respiratory chain. The immediate electron acceptor for the enzyme is believed to be ubiquinone. This chain is NADH dehydrogenase [ubiquinone] 1 alpha subcomplex subunit 10, mitochondrial, found in Drosophila melanogaster (Fruit fly).